Here is a 79-residue protein sequence, read N- to C-terminus: Moronecidin (79 aa).

The signal sequence occupies residues 1 to 22 (MKCATLFLVLSMVVLMAEPGDA). Residue Gly44 is modified to Glycine amide. The tract at residues 45–79 (GKAEQDQQDQQYQQEQQEQQAQQYQRFNRERAAFD) is disordered. Positions 47-79 (AEQDQQDQQYQQEQQEQQAQQYQRFNRERAAFD) are excised as a propeptide. The segment covering 52–69 (QDQQYQQEQQEQQAQQYQ) has biased composition (low complexity).

As to expression, expressed in mast cells in gill, skin and gut, and in lining blood vessels in the viscera. Also in intestine, spleen, anterior kidney, and blood cells.

Its subcellular location is the secreted. Its function is as follows. Antimicrobial peptide with broad-spectrum activity against Gram-positive and Gram-negative bacteria as well as against a variety of fungi. Rapidly inactivates channel catfish herpesvirus (ED(50)=4 uM) and frog virus 3 (ED(50)=13 uM) over a wide temperature range. Seems to disrupt the membranes by adopting an alpha helical conformation and forming toroidal pores. Has hemolytic activity. This chain is Moronecidin, found in Morone saxatilis (Striped bass).